The chain runs to 402 residues: Flavohemoprotein (402 aa).

The 136-residue stretch at 1–136 (MLSAKTIEIV…IADAFISIEA (136 aa)) folds into the Globin domain. His-85 is a binding site for heme b. Catalysis depends on charge relay system residues Tyr-95 and Glu-135. The segment at 147–402 (GGWKDFRNFV…EFFGPATSLQ (256 aa)) is reductase. One can recognise an FAD-binding FR-type domain in the interval 150 to 260 (KDFRNFVIVK…SAPAGDFVLN (111 aa)). Residues Tyr-188 and 204 to 207 (RQYS) contribute to the FAD site. 273–278 (GVGITP) contacts NADP(+). Residue 394 to 397 (FFGP) coordinates FAD.

The protein belongs to the globin family. Two-domain flavohemoproteins subfamily. In the C-terminal section; belongs to the flavoprotein pyridine nucleotide cytochrome reductase family. It depends on heme b as a cofactor. Requires FAD as cofactor.

The enzyme catalyses 2 nitric oxide + NADPH + 2 O2 = 2 nitrate + NADP(+) + H(+). The catalysed reaction is 2 nitric oxide + NADH + 2 O2 = 2 nitrate + NAD(+) + H(+). Functionally, is involved in NO detoxification in an aerobic process, termed nitric oxide dioxygenase (NOD) reaction that utilizes O(2) and NAD(P)H to convert NO to nitrate, which protects the bacterium from various noxious nitrogen compounds. Therefore, plays a central role in the inducible response to nitrosative stress. The protein is Flavohemoprotein of Bacillus cereus (strain ATCC 14579 / DSM 31 / CCUG 7414 / JCM 2152 / NBRC 15305 / NCIMB 9373 / NCTC 2599 / NRRL B-3711).